A 74-amino-acid polypeptide reads, in one-letter code: MKPEIHPDYHTIKVVMTDGTEYFTRSTYGAEGDTLNLDIDSKSHPAWTGGTQQILDRGGRVSRFQKKFSGFLKK.

Belongs to the bacterial ribosomal protein bL31 family. Type A subfamily. Part of the 50S ribosomal subunit.

Functionally, binds the 23S rRNA. In Afipia carboxidovorans (strain ATCC 49405 / DSM 1227 / KCTC 32145 / OM5) (Oligotropha carboxidovorans), this protein is Large ribosomal subunit protein bL31.